Reading from the N-terminus, the 20-residue chain is D-alpha-glycerophosphatase (20 aa).

Monomer. It depends on Mg(2+) as a cofactor. The cofactor is Mn(2+).

The protein resides in the cytoplasm. Its pathway is polyol metabolism; glycerol biosynthesis. The protein is D-alpha-glycerophosphatase of Bacillus licheniformis.